The primary structure comprises 471 residues: Probable ribonuclease FAU-1 (471 aa).

One can recognise an S1 motif domain in the interval 93 to 139 (GAVFDAAVDHTVGGGAILDLGDDREAYLPFGAVDDHVTDGDTLRVAI).

It belongs to the FAU-1 family.

Functionally, probable RNase involved in rRNA stability through maturation and/or degradation of precursor rRNAs. Binds to RNA in loop regions with AU-rich sequences. This chain is Probable ribonuclease FAU-1, found in Halobacterium salinarum (strain ATCC 29341 / DSM 671 / R1).